We begin with the raw amino-acid sequence, 1762 residues long: Non-reducing polyketide synthase PKS8-1 (1762 aa).

The tract at residues 17–247 (DIYRGLHNHS…ARYIELPVYG (231 aa)) is N-terminal acylcarrier protein transacylase domain (SAT). The Ketosynthase family 3 (KS3) domain occupies 385–819 (QSKLAITGIS…GGNTTMVLEE (435 aa)). Residues cysteine 558, histidine 694, and histidine 737 each act as for beta-ketoacyl synthase activity in the active site. The tract at residues 920–1240 (FSFTGQGASH…MAALHLTGVA (321 aa)) is malonyl-CoA:ACP transacylase (MAT) domain. A product template (PT) domain region spans residues 1308–1622 (TSTVQQVIAL…PRILLNRFFS (315 aa)). The segment at 1312-1448 (QQVIALEVEG…GDANDWLSSW (137 aa)) is N-terminal hotdog fold. The PKS/mFAS DH domain maps to 1312–1618 (QQVIALEVEG…FRSYPRILLN (307 aa)). Residue histidine 1344 is the Proton acceptor; for dehydratase activity of the active site. The tract at residues 1471–1618 (ASRFTRNMAY…FRSYPRILLN (148 aa)) is C-terminal hotdog fold. Aspartate 1529 functions as the Proton donor; for dehydratase activity in the catalytic mechanism. Positions 1632-1689 (RAGNAATVTPQVTIPKPPSSLKTPAPANPSRRDSGVESKPLPPPQPKQAPPSTDSENS) are disordered. The segment covering 1671–1680 (PLPPPQPKQA) has biased composition (pro residues). One can recognise a Carrier domain in the interval 1685–1762 (DSENSTISKA…DMRRWLEEHY (78 aa)). At serine 1722 the chain carries O-(pantetheine 4'-phosphoryl)serine.

It catalyses the reaction holo-[ACP] + 8 malonyl-CoA + 8 H(+) = atrochrysone carboxyl-[ACP] + 8 CO2 + 8 CoA + 2 H2O. It functions in the pathway secondary metabolite biosynthesis. In terms of biological role, non-reducing polyketide synthase; part of the gene cluster that mediates the biosynthesis of an emodin derivative that may be involved in black Sigatoka disease of banana. The pathway begins with the synthesis of atrochrysone thioester by the polyketide synthase PKS8-1. The atrochrysone carboxyl ACP thioesterase MYCFIDRAFT_190111 then breaks the thioester bond and releases the atrochrysone carboxylic acid from PKS8-1. The decarboxylase MYCFIDRAFT_34057 then catalyzes the concerted decarboxylation-elimination required to convert atochrysone carboxylic acid into emodin anthrone, which is further oxidized to emodin by the anthrone oxygenase MYCFIDRAFT_34418. The functions of the other tailoring enzymes as well as the final product of the cluster have still to be identified. In Pseudocercospora fijiensis (strain CIRAD86) (Black leaf streak disease fungus), this protein is Non-reducing polyketide synthase PKS8-1 (PKS8-1).